Consider the following 456-residue polypeptide: UDP-N-acetylmuramate--L-alanine ligase (456 aa).

An ATP-binding site is contributed by Gly112 to Thr118.

It belongs to the MurCDEF family.

The protein localises to the cytoplasm. The enzyme catalyses UDP-N-acetyl-alpha-D-muramate + L-alanine + ATP = UDP-N-acetyl-alpha-D-muramoyl-L-alanine + ADP + phosphate + H(+). Its pathway is cell wall biogenesis; peptidoglycan biosynthesis. Functionally, cell wall formation. The sequence is that of UDP-N-acetylmuramate--L-alanine ligase from Desulfatibacillum aliphaticivorans.